Consider the following 256-residue polypeptide: Non-homologous end joining protein Ku 2 (256 aa).

The Ku domain maps to 13 to 184 (FADTDVAVKL…SLELQESPVS (172 aa)).

The protein belongs to the prokaryotic Ku family. As to quaternary structure, homodimer. Interacts with LigD.

In terms of biological role, with LigD forms a non-homologous end joining (NHEJ) DNA repair enzyme, which repairs dsDNA breaks with reduced fidelity. Binds linear dsDNA with 5'- and 3'- overhangs but not closed circular dsDNA nor ssDNA. Recruits and stimulates the ligase activity of LigD. In Geotalea uraniireducens (strain Rf4) (Geobacter uraniireducens), this protein is Non-homologous end joining protein Ku 2.